Here is a 598-residue protein sequence, read N- to C-terminus: Elongation factor 4 (598 aa).

The 182-residue stretch at 2-183 (KKIRNFCIIA…AIIEKIPPPK (182 aa)) folds into the tr-type G domain. GTP is bound by residues 14 to 19 (DHGKST) and 130 to 133 (NKVD).

This sequence belongs to the TRAFAC class translation factor GTPase superfamily. Classic translation factor GTPase family. LepA subfamily.

It is found in the cell inner membrane. The enzyme catalyses GTP + H2O = GDP + phosphate + H(+). Its function is as follows. Required for accurate and efficient protein synthesis under certain stress conditions. May act as a fidelity factor of the translation reaction, by catalyzing a one-codon backward translocation of tRNAs on improperly translocated ribosomes. Back-translocation proceeds from a post-translocation (POST) complex to a pre-translocation (PRE) complex, thus giving elongation factor G a second chance to translocate the tRNAs correctly. Binds to ribosomes in a GTP-dependent manner. The polypeptide is Elongation factor 4 (Flavobacterium johnsoniae (strain ATCC 17061 / DSM 2064 / JCM 8514 / BCRC 14874 / CCUG 350202 / NBRC 14942 / NCIMB 11054 / UW101) (Cytophaga johnsonae)).